A 154-amino-acid polypeptide reads, in one-letter code: NADPH-dependent 7-cyano-7-deazaguanine reductase (154 aa).

The Thioimide intermediate role is filled by cysteine 52. Aspartate 59 (proton donor) is an active-site residue. Substrate is bound by residues 74-76 (VES) and 93-94 (HE).

It belongs to the GTP cyclohydrolase I family. QueF type 1 subfamily.

The protein localises to the cytoplasm. It catalyses the reaction 7-aminomethyl-7-carbaguanine + 2 NADP(+) = 7-cyano-7-deazaguanine + 2 NADPH + 3 H(+). Its pathway is tRNA modification; tRNA-queuosine biosynthesis. Functionally, catalyzes the NADPH-dependent reduction of 7-cyano-7-deazaguanine (preQ0) to 7-aminomethyl-7-deazaguanine (preQ1). This chain is NADPH-dependent 7-cyano-7-deazaguanine reductase, found in Rhizobium rhizogenes (strain K84 / ATCC BAA-868) (Agrobacterium radiobacter).